The following is a 261-amino-acid chain: Probable RNA-binding protein ARP1 (261 aa).

The RRM domain maps to 17–94 (TKVFVGGLAW…RRANCNLASL (78 aa)). The tract at residues 96 to 122 (GRLRKSPTMTSPQQGPKNGNRATPPHV) is disordered. The segment covering 102–116 (PTMTSPQQGPKNGNR) has biased composition (polar residues).

Expressed in vasculature of leaves, roots and siliques.

It localises to the nucleus. Functionally, probable RNA-binding protein involved in the regulation of abscisic acid (ABA) response during seed germination. May regulate transcript levels of several germination-responsive genes under ABA. The sequence is that of Probable RNA-binding protein ARP1 from Arabidopsis thaliana (Mouse-ear cress).